The chain runs to 146 residues: VHLTGEEKSAVTTLWGKVNVEEVGGEALGRLLVVYPWTQRFFESFGDLSSPDAVMGNPKVKAHGKKVLGAFSDGLAHLDNLKGTFAQLSELHCNKLHVDPENFRLLGNVLVCVLAHHFGKEFTPQVQAAYQKVVAGVANALAHKYH.

Valine 1 carries the post-translational modification N-acetylvaline. The Globin domain maps to 2–146 (HLTGEEKSAV…VANALAHKYH (145 aa)). Phosphothreonine is present on threonine 12. Serine 44 bears the Phosphoserine mark. N6-acetyllysine is present on lysine 59. Position 63 (histidine 63) interacts with heme b. N6-acetyllysine is present on lysine 82. Histidine 92 is a binding site for heme b. Cysteine 93 bears the S-nitrosocysteine mark. Lysine 144 is subject to N6-acetyllysine.

It belongs to the globin family. In terms of assembly, heterotetramer of two alpha chains and two beta chains. As to expression, red blood cells.

Involved in oxygen transport from the lung to the various peripheral tissues. This chain is Hemoglobin subunit beta (HBB), found in Leontocebus fuscicollis (Brown-mantled tamarin).